Reading from the N-terminus, the 355-residue chain is UDP-N-acetylglucosamine--N-acetylmuramyl-(pentapeptide) pyrophosphoryl-undecaprenol N-acetylglucosamine transferase (355 aa).

Residues 15–17, N127, R163, S191, I244, 263–268, and Q288 each bind UDP-N-acetyl-alpha-D-glucosamine; these read TGG and ALTVSE.

This sequence belongs to the glycosyltransferase 28 family. MurG subfamily.

The protein localises to the cell inner membrane. It carries out the reaction di-trans,octa-cis-undecaprenyl diphospho-N-acetyl-alpha-D-muramoyl-L-alanyl-D-glutamyl-meso-2,6-diaminopimeloyl-D-alanyl-D-alanine + UDP-N-acetyl-alpha-D-glucosamine = di-trans,octa-cis-undecaprenyl diphospho-[N-acetyl-alpha-D-glucosaminyl-(1-&gt;4)]-N-acetyl-alpha-D-muramoyl-L-alanyl-D-glutamyl-meso-2,6-diaminopimeloyl-D-alanyl-D-alanine + UDP + H(+). Its pathway is cell wall biogenesis; peptidoglycan biosynthesis. Cell wall formation. Catalyzes the transfer of a GlcNAc subunit on undecaprenyl-pyrophosphoryl-MurNAc-pentapeptide (lipid intermediate I) to form undecaprenyl-pyrophosphoryl-MurNAc-(pentapeptide)GlcNAc (lipid intermediate II). This Escherichia coli O9:H4 (strain HS) protein is UDP-N-acetylglucosamine--N-acetylmuramyl-(pentapeptide) pyrophosphoryl-undecaprenol N-acetylglucosamine transferase.